The following is a 96-amino-acid chain: Co-chaperonin GroES (96 aa).

The protein belongs to the GroES chaperonin family. In terms of assembly, heptamer of 7 subunits arranged in a ring. Interacts with the chaperonin GroEL.

The protein resides in the cytoplasm. Together with the chaperonin GroEL, plays an essential role in assisting protein folding. The GroEL-GroES system forms a nano-cage that allows encapsulation of the non-native substrate proteins and provides a physical environment optimized to promote and accelerate protein folding. GroES binds to the apical surface of the GroEL ring, thereby capping the opening of the GroEL channel. The protein is Co-chaperonin GroES of Leptospira interrogans serogroup Icterohaemorrhagiae serovar copenhageni (strain Fiocruz L1-130).